We begin with the raw amino-acid sequence, 322 residues long: Protein-methionine-sulfoxide reductase catalytic subunit MsrP (322 aa).

Positions 1–59 form a signal peptide, tat-type signal; that stretch reads MSFRDALNLPSSEITDESVYRDRRRLLQLLALTPALGVAGCAEADPPPPPKTVVTPAQA. Residues asparagine 79, 82–83, cysteine 137, threonine 172, asparagine 220, arginine 225, and 236–238 each bind Mo-molybdopterin; these read YE and SIK.

The protein belongs to the MsrP family. As to quaternary structure, heterodimer of a catalytic subunit (MsrP) and a heme-binding subunit (MsrQ). Mo-molybdopterin serves as cofactor. In terms of processing, predicted to be exported by the Tat system. The position of the signal peptide cleavage has not been experimentally proven.

Its subcellular location is the periplasm. It carries out the reaction L-methionyl-[protein] + a quinone + H2O = L-methionyl-(S)-S-oxide-[protein] + a quinol. The catalysed reaction is L-methionyl-[protein] + a quinone + H2O = L-methionyl-(R)-S-oxide-[protein] + a quinol. Its function is as follows. Part of the MsrPQ system that repairs oxidized periplasmic proteins containing methionine sulfoxide residues (Met-O), using respiratory chain electrons. Thus protects these proteins from oxidative-stress damage caused by reactive species of oxygen and chlorine generated by the host defense mechanisms. MsrPQ is essential for the maintenance of envelope integrity under bleach stress, rescuing a wide series of structurally unrelated periplasmic proteins from methionine oxidation. The catalytic subunit MsrP is non-stereospecific, being able to reduce both (R-) and (S-) diastereoisomers of methionine sulfoxide. This chain is Protein-methionine-sulfoxide reductase catalytic subunit MsrP, found in Xanthomonas axonopodis pv. citri (strain 306).